The chain runs to 588 residues: Adenine deaminase (588 aa).

It belongs to the metallo-dependent hydrolases superfamily. Adenine deaminase family. As to quaternary structure, homodimer. The cofactor is Mn(2+).

It carries out the reaction adenine + H2O + H(+) = hypoxanthine + NH4(+). The sequence is that of Adenine deaminase from Escherichia fergusonii (strain ATCC 35469 / DSM 13698 / CCUG 18766 / IAM 14443 / JCM 21226 / LMG 7866 / NBRC 102419 / NCTC 12128 / CDC 0568-73).